The chain runs to 129 residues: Protein Turandot A (129 aa).

Residues 1 to 21 (MNSSTALMCFALLLISPLCMG) form the signal peptide. An N-linked (GlcNAc...) asparagine glycan is attached at N49.

The protein belongs to the Turandot family. Expressed in the fat body (at protein level).

Its subcellular location is the secreted. In terms of biological role, a humoral factor that plays a role in stress tolerance; gives increased resistance to the lethal effects of bacterial challenge and stress. Regulated by the JAK/STAT pathway and NF-KB-like Relish pathway in the fat body, upd3 in the hemocytes and Mekk1 in response to septic injury and consequent immune response. The chain is Protein Turandot A from Drosophila melanogaster (Fruit fly).